Reading from the N-terminus, the 113-residue chain is UPF0102 protein Shal_4069 (113 aa).

It belongs to the UPF0102 family.

The chain is UPF0102 protein Shal_4069 from Shewanella halifaxensis (strain HAW-EB4).